Reading from the N-terminus, the 120-residue chain is NAD(P)H-quinone oxidoreductase subunit 3, chloroplastic (120 aa).

Transmembrane regions (helical) follow at residues 9–29, 64–84, and 88–108; these read IFWA…FISG, MFAL…PWAM, and VLGL…IVGL.

Belongs to the complex I subunit 3 family. As to quaternary structure, NDH is composed of at least 16 different subunits, 5 of which are encoded in the nucleus.

It localises to the plastid. It is found in the chloroplast thylakoid membrane. The enzyme catalyses a plastoquinone + NADH + (n+1) H(+)(in) = a plastoquinol + NAD(+) + n H(+)(out). It carries out the reaction a plastoquinone + NADPH + (n+1) H(+)(in) = a plastoquinol + NADP(+) + n H(+)(out). In terms of biological role, NDH shuttles electrons from NAD(P)H:plastoquinone, via FMN and iron-sulfur (Fe-S) centers, to quinones in the photosynthetic chain and possibly in a chloroplast respiratory chain. The immediate electron acceptor for the enzyme in this species is believed to be plastoquinone. Couples the redox reaction to proton translocation, and thus conserves the redox energy in a proton gradient. This chain is NAD(P)H-quinone oxidoreductase subunit 3, chloroplastic, found in Jasminum nudiflorum (Winter jasmine).